Reading from the N-terminus, the 174-residue chain is NADH-quinone oxidoreductase subunit I (174 aa).

4Fe-4S ferredoxin-type domains follow at residues 61–91 and 103–132; these read LTVK…ITAA and ISYE…LGPE. C71, C74, C77, C81, C112, C115, C118, and C122 together coordinate [4Fe-4S] cluster.

Belongs to the complex I 23 kDa subunit family. As to quaternary structure, NDH-1 is composed of 14 different subunits. Subunits NuoA, H, J, K, L, M, N constitute the membrane sector of the complex. The cofactor is [4Fe-4S] cluster.

The protein localises to the cell inner membrane. It catalyses the reaction a quinone + NADH + 5 H(+)(in) = a quinol + NAD(+) + 4 H(+)(out). Functionally, NDH-1 shuttles electrons from NADH, via FMN and iron-sulfur (Fe-S) centers, to quinones in the respiratory chain. The immediate electron acceptor for the enzyme in this species is believed to be ubiquinone. Couples the redox reaction to proton translocation (for every two electrons transferred, four hydrogen ions are translocated across the cytoplasmic membrane), and thus conserves the redox energy in a proton gradient. The protein is NADH-quinone oxidoreductase subunit I of Bdellovibrio bacteriovorus (strain ATCC 15356 / DSM 50701 / NCIMB 9529 / HD100).